A 432-amino-acid polypeptide reads, in one-letter code: Cyclin-A2 (432 aa).

Met1 carries the post-translational modification N-acetylmethionine. Position 5 is a phosphoserine (Ser5). Disordered regions lie at residues 26 to 45 (LQEDQENINPEKAAPVQQPR) and 55 to 75 (SGNPRGLAQQQRPKTRRVAPL). Ser55 bears the Phosphoserine mark.

It belongs to the cyclin family. Cyclin AB subfamily. Interacts with the CDK1 and CDK2 protein kinases to form serine/threonine kinase holoenzyme complexes. Interacts with CDK1 (hyperphosphorylated form in G1 and underphosphorylated forms in S and G2). Interacts with CDK2; the interaction increases from G1 to G2. Interacts (associated with CDK2 but not with CDK1) with SCAPER; regulates the activity of CCNA2/CDK2 by transiently maintaining CCNA2 in the cytoplasm. Forms a ternary complex with CDK2 and CDKN1B; CDKN1B inhibits the kinase activity of CDK2 through conformational rearrangements. Interacts with INCA1. In terms of assembly, (Microbial infection) Interacts with human cytomegalovirus protein UL32. Polyubiquitinated via 'Lys-11'-linked ubiquitin by the anaphase-promoting complex (APC/C), leading to its degradation by the proteasome. Deubiquitinated and stabilized by USP37 enables entry into S phase. Ubiquitinated during the G1 phase by the SCF(FBXO31) complex, leading to its proteasomal degradation.

It is found in the nucleus. Its subcellular location is the cytoplasm. Cyclin which controls both the G1/S and the G2/M transition phases of the cell cycle. Functions through the formation of specific serine/threonine protein kinase holoenzyme complexes with the cyclin-dependent protein kinases CDK1 or CDK2. The cyclin subunit confers the substrate specificity of these complexes and differentially interacts with and activates CDK1 and CDK2 throughout the cell cycle. This is Cyclin-A2 from Homo sapiens (Human).